The primary structure comprises 493 residues: Neisserial heparin binding antigen (493 aa).

Residues 1–22 (MKEMMMFKRSVIAMACIFALSA) form the signal peptide. Cys-23 carries N-palmitoyl cysteine lipidation. The S-diacylglycerol cysteine moiety is linked to residue Cys-23. The segment at 27–206 (GGGSPDVKSA…NPAPANGGSN (180 aa)) is disordered. A compositionally biased stretch (basic and acidic residues) spans 48–58 (SEKETEAKEDA). Residues 59–75 (PQAGSQGQGAPSAQGSQ) are compositionally biased toward low complexity. 2 stretches are compositionally biased toward polar residues: residues 106-123 (DMPQNAAGTDSSTPNHTP) and 132-147 (MENQATDAGESSQPAN). The segment covering 165–188 (AGGQNAGNTAAQGANQAGNNQAAG) has biased composition (low complexity). The Arg-rich motif motif lies at 301–311 (RFRRSARSRRS).

This sequence belongs to the NHBA family. The C-terminal beta-barrel forms a monomer. Post-translationally, cleaved in vivo by the Neisserial phase-variable autotransporter/serine protease NalP to give 2 fragments. The N-terminus remains in the cell outer membrane while the C-terminus (beginning on Ser-298) is soluble; this soluble fragment is called C2. Cleaved in vitro by human lactoferrin (LTF, between Arg-310 and Ser-311), this fragment is called C1. Recombinant and cell surface protein is cleaved by human saliva kallikrein (KLK1) between Ser-308 and Arg-309; in saliva kallikrein is more active on NHBA than lactoferrin. Human plasma kallikrein (KLKB1) cleaves in a similar manner to KLK1.

It localises to the cell outer membrane. A major human immunogenic protein detected in patients recovering from meningitidis, where it induces bactericidal antibodies. Binds human cells, heparin and heparan sulfate proteoglycan in vitro via the Arg-rich motif. Heparin-binding to this protein protects bacteria against killing by bactericidal antibodies (serum killing). The bacteria binds a number of human extracellular sialyated and/or sulfated glycans via this protein, including chondroitin sulfate, heparin and ganglioside GT3. Whole protein binds DNA. In terms of biological role, plays a role in extracellular-DNA (eDNA) mediated biofilm formation. In some strains (including cc32 strain H44/76 but not cc11 strain B16B6) eDNA stimulates biofilm formation. When NHBA is not processed by NalP, biofilm formation increases. This is probably because the number of positively charged, NHBA- and IgA-derived DNA-binding peptides on the cell surface rises, resulting in increased DNA-binding peptides and increased biofilm formation. This is Neisserial heparin binding antigen from Neisseria meningitidis serogroup B / serotype 15 (strain H44/76).